A 319-amino-acid chain; its full sequence is DNA-directed RNA polymerase subunit alpha (319 aa).

The alpha N-terminal domain (alpha-NTD) stretch occupies residues Met1 to Ser227. The segment at Leu242–Val319 is alpha C-terminal domain (alpha-CTD).

This sequence belongs to the RNA polymerase alpha chain family. Homodimer. The RNAP catalytic core consists of 2 alpha, 1 beta, 1 beta' and 1 omega subunit. When a sigma factor is associated with the core the holoenzyme is formed, which can initiate transcription.

The catalysed reaction is RNA(n) + a ribonucleoside 5'-triphosphate = RNA(n+1) + diphosphate. In terms of biological role, DNA-dependent RNA polymerase catalyzes the transcription of DNA into RNA using the four ribonucleoside triphosphates as substrates. This is DNA-directed RNA polymerase subunit alpha from Hydrogenobaculum sp. (strain Y04AAS1).